Consider the following 164-residue polypeptide: UPF0114 protein KPK_0696 (164 aa).

The next 4 membrane-spanning stretches (helical) occupy residues L15–F35, L53–V73, V109–M126, and L136–L156.

It belongs to the UPF0114 family.

It is found in the cell membrane. The protein is UPF0114 protein KPK_0696 of Klebsiella pneumoniae (strain 342).